A 441-amino-acid chain; its full sequence is Glutamate--tRNA ligase 1 (441 aa).

Positions 9–19 (PSPTGFIHVGN) match the 'HIGH' region motif. The short motif at 239-243 (ALSKR) is the 'KMSKS' region element. Lysine 242 is a binding site for ATP.

Belongs to the class-I aminoacyl-tRNA synthetase family. Glutamate--tRNA ligase type 1 subfamily. In terms of assembly, monomer.

It localises to the cytoplasm. The catalysed reaction is tRNA(Glu) + L-glutamate + ATP = L-glutamyl-tRNA(Glu) + AMP + diphosphate. Catalyzes the attachment of glutamate to tRNA(Glu) in a two-step reaction: glutamate is first activated by ATP to form Glu-AMP and then transferred to the acceptor end of tRNA(Glu). The chain is Glutamate--tRNA ligase 1 from Cereibacter sphaeroides (strain ATCC 17025 / ATH 2.4.3) (Rhodobacter sphaeroides).